Consider the following 906-residue polypeptide: Protein translocase subunit SecA (906 aa).

Residues Gln86, 104-108, and Asp499 contribute to the ATP site; that span reads GEGKT. A disordered region spans residues 862–887; the sequence is KPVVSRIDPKDRNPDDPTSWGRVSRN. Positions 890, 892, 901, and 902 each coordinate Zn(2+).

This sequence belongs to the SecA family. Monomer and homodimer. Part of the essential Sec protein translocation apparatus which comprises SecA, SecYEG and auxiliary proteins SecDF-YajC and YidC. Zn(2+) serves as cofactor.

It is found in the cell inner membrane. The protein localises to the cytoplasm. It catalyses the reaction ATP + H2O + cellular proteinSide 1 = ADP + phosphate + cellular proteinSide 2.. Its function is as follows. Part of the Sec protein translocase complex. Interacts with the SecYEG preprotein conducting channel. Has a central role in coupling the hydrolysis of ATP to the transfer of proteins into and across the cell membrane, serving both as a receptor for the preprotein-SecB complex and as an ATP-driven molecular motor driving the stepwise translocation of polypeptide chains across the membrane. This chain is Protein translocase subunit SecA, found in Rickettsia peacockii (strain Rustic).